Here is a 392-residue protein sequence, read N- to C-terminus: Probable tRNA sulfurtransferase (392 aa).

Positions 59–166 (SCYREALKRV…DEGLFIYTTE (108 aa)) constitute a THUMP domain. Residues 186-187 (LL), 211-212 (YF), R269, G290, and Q299 each bind ATP.

It belongs to the ThiI family.

The protein resides in the cytoplasm. It carries out the reaction [ThiI sulfur-carrier protein]-S-sulfanyl-L-cysteine + a uridine in tRNA + 2 reduced [2Fe-2S]-[ferredoxin] + ATP + H(+) = [ThiI sulfur-carrier protein]-L-cysteine + a 4-thiouridine in tRNA + 2 oxidized [2Fe-2S]-[ferredoxin] + AMP + diphosphate. It catalyses the reaction [ThiS sulfur-carrier protein]-C-terminal Gly-Gly-AMP + S-sulfanyl-L-cysteinyl-[cysteine desulfurase] + AH2 = [ThiS sulfur-carrier protein]-C-terminal-Gly-aminoethanethioate + L-cysteinyl-[cysteine desulfurase] + A + AMP + 2 H(+). It functions in the pathway cofactor biosynthesis; thiamine diphosphate biosynthesis. Catalyzes the ATP-dependent transfer of a sulfur to tRNA to produce 4-thiouridine in position 8 of tRNAs, which functions as a near-UV photosensor. Also catalyzes the transfer of sulfur to the sulfur carrier protein ThiS, forming ThiS-thiocarboxylate. This is a step in the synthesis of thiazole, in the thiamine biosynthesis pathway. The sulfur is donated as persulfide by IscS. This Coxiella burnetii (strain RSA 493 / Nine Mile phase I) protein is Probable tRNA sulfurtransferase.